The primary structure comprises 282 residues: Bifunctional protein FolD (282 aa).

NADP(+) is bound by residues 164-166 (GAS), I189, and I230.

It belongs to the tetrahydrofolate dehydrogenase/cyclohydrolase family. As to quaternary structure, homodimer.

It catalyses the reaction (6R)-5,10-methylene-5,6,7,8-tetrahydrofolate + NADP(+) = (6R)-5,10-methenyltetrahydrofolate + NADPH. It carries out the reaction (6R)-5,10-methenyltetrahydrofolate + H2O = (6R)-10-formyltetrahydrofolate + H(+). It participates in one-carbon metabolism; tetrahydrofolate interconversion. Its function is as follows. Catalyzes the oxidation of 5,10-methylenetetrahydrofolate to 5,10-methenyltetrahydrofolate and then the hydrolysis of 5,10-methenyltetrahydrofolate to 10-formyltetrahydrofolate. The protein is Bifunctional protein FolD of Campylobacter jejuni (strain RM1221).